We begin with the raw amino-acid sequence, 83 residues long: MSGSTGERSFADIITSIRYWVIHSITIPSLFIAGWLFVSTGLAYDVFGSPRPNEYFTESRQGIPLITGRFDSLEQLDEFSKSF.

A helical membrane pass occupies residues 21 to 35; sequence VIHSITIPSLFIAGW. H23 is a binding site for heme.

It belongs to the PsbE/PsbF family. In terms of assembly, heterodimer of an alpha subunit and a beta subunit. PSII is composed of 1 copy each of membrane proteins PsbA, PsbB, PsbC, PsbD, PsbE, PsbF, PsbH, PsbI, PsbJ, PsbK, PsbL, PsbM, PsbT, PsbX, PsbY, PsbZ, Psb30/Ycf12, at least 3 peripheral proteins of the oxygen-evolving complex and a large number of cofactors. It forms dimeric complexes. The cofactor is heme b.

Its subcellular location is the plastid. The protein resides in the chloroplast thylakoid membrane. In terms of biological role, this b-type cytochrome is tightly associated with the reaction center of photosystem II (PSII). PSII is a light-driven water:plastoquinone oxidoreductase that uses light energy to abstract electrons from H(2)O, generating O(2) and a proton gradient subsequently used for ATP formation. It consists of a core antenna complex that captures photons, and an electron transfer chain that converts photonic excitation into a charge separation. This Mesembryanthemum crystallinum (Common ice plant) protein is Cytochrome b559 subunit alpha.